Reading from the N-terminus, the 222-residue chain is Glutathione S-transferase A6 (222 aa).

The region spanning 3–83 is the GST N-terminal domain; it reads EKPLFHYDEA…YFSSKYNLYG (81 aa). Glutathione-binding positions include tyrosine 9, arginine 45, 54–55, and 67–68; these read QV and QT. Positions 85-208 constitute a GST C-terminal domain; the sequence is DMKERALIDM…QPGSQRQPPV (124 aa).

Belongs to the GST superfamily. Alpha family. Homodimer or heterodimer of GSTA1 and GSTA2.

Its subcellular location is the cytoplasm. It catalyses the reaction RX + glutathione = an S-substituted glutathione + a halide anion + H(+). Functionally, conjugation of reduced glutathione to a wide number of exogenous and endogenous hydrophobic electrophiles. The polypeptide is Glutathione S-transferase A6 (Gsta6) (Rattus norvegicus (Rat)).